The following is a 250-amino-acid chain: Flap endonuclease Xni (250 aa).

Asp104 provides a ligand contact to Mg(2+). Positions 160 to 249 (VQPQQLTDFW…LQGNLQQLRL (90 aa)) constitute a 5'-3' exonuclease domain. The K(+) site is built by Leu171, Ala172, Pro180, Val182, and Ile185. Residues 184-189 (GIGPKS) form an interaction with DNA region.

Belongs to the Xni family. Mg(2+) is required as a cofactor. K(+) serves as cofactor.

In terms of biological role, has flap endonuclease activity. During DNA replication, flap endonucleases cleave the 5'-overhanging flap structure that is generated by displacement synthesis when DNA polymerase encounters the 5'-end of a downstream Okazaki fragment. The chain is Flap endonuclease Xni from Sodalis glossinidius (strain morsitans).